The chain runs to 701 residues: Ephexin-1 (701 aa).

Composition is skewed to basic and acidic residues over residues 1–11 and 26–48; these read METKNSEDQGK and GPAE…EEPR. The tract at residues 1 to 141 is disordered; it reads METKNSEDQG…TPEECPALTD (141 aa). Residues 1-264 are regulatory region; modulates activity toward RHOA, RAC1 and CDC42; it reads METKNSEDQG…LDILQPEETK (264 aa). A compositionally biased stretch (polar residues) spans 120–132; sequence ASESSSTPGNGTT. Tyr172 carries the phosphotyrosine modification. Residues 187 to 226 form a disordered region; sequence RRQQDAEIQGNSDGSQAGEDNAEEEEEEEEEPASPPERRA. Residues 206–218 are compositionally biased toward acidic residues; that stretch reads DNAEEEEEEEEEP. The region spanning 264-448 is the DH domain; the sequence is KLQEAMFELV…EMVVKACNEG (185 aa). In terms of domain architecture, PH spans 480 to 592; that stretch reads WLLKQGELQQ…WMTSLAPNRR (113 aa). The 62-residue stretch at 603-664 folds into the SH3 domain; that stretch reads LDCPQVQCVH…PSSMTEEILN (62 aa). Residues 679 to 690 are compositionally biased toward basic and acidic residues; it reads HKMEDPQRSQNK. The segment at 679–701 is disordered; it reads HKMEDPQRSQNKDRRKLGSRNRQ. Basic residues predominate over residues 691–701; it reads DRRKLGSRNRQ.

As to quaternary structure, interacts with CDK5R1 and EPHA4; activated by EPHA4 through the CDK5 kinase. In terms of processing, phosphorylation by CDK5 upon EPHA4 activation by EFNA1 may regulate dendritic spine morphogenesis. Src-dependent phosphorylation at Tyr-172 upon EPHA4 activation increases the guanine exchange factor activity toward RHOA. Expressed in telencephalic neurons (at protein level). Expressed in brain, spinal cord and testis.

The protein localises to the cytoplasm. It is found in the membrane. Its subcellular location is the cell projection. The protein resides in the growth cone. In terms of biological role, acts as a guanine nucleotide exchange factor (GEF) which differentially activates the GTPases RHOA, RAC1 and CDC42. Plays a role in axon guidance regulating ephrin-induced growth cone collapse and dendritic spine morphogenesis. Upon activation by ephrin through EPHA4, the GEF activity switches toward RHOA resulting in its activation. Activated RHOA promotes cone retraction at the expense of RAC1- and CDC42-stimulated growth cone extension. The protein is Ephexin-1 (Ngef) of Rattus norvegicus (Rat).